The chain runs to 270 residues: SAMP-activating enzyme E1 (270 aa).

Residues glycine 42, aspartate 63, 70 to 74 (SNLQR), and lysine 87 each bind ATP. A Glycyl lysine isopeptide (Lys-Gly) (interchain with G-Cter in SAMP2) cross-link involves residue lysine 113. 131–132 (DN) is an ATP binding site. Residues cysteine 171 and cysteine 174 each contribute to the Zn(2+) site. Catalysis depends on cysteine 188, which acts as the Glycyl thioester intermediate. Cysteine 245 and cysteine 248 together coordinate Zn(2+).

This sequence belongs to the HesA/MoeB/ThiF family. As to quaternary structure, interacts with NcsA. The cofactor is Zn(2+). Sampylated at Lys-113 with the archaeal ubiquitin-like protein SAMP2. Also sampylated with SAMP1.

It catalyses the reaction [small archaeal modifier protein]-C-terminal Gly-Gly + ATP + H(+) = [small archaeal modifier protein]-C-terminal Gly-Gly-AMP + diphosphate. Its function is as follows. Likely activates multiple ubiquitin-like SAMPs for protein conjugation as well as for sulfur transfer, via ATP-dependent adenylation at their C-terminus. In fact, it is required for the formation of all three SAMP1-, SAMP2- and SAMP3-protein conjugates, and for molybdenum cofactor (MoCo) biosynthesis and thiolation of tRNAs. The chain is SAMP-activating enzyme E1 (ubaA) from Haloferax volcanii (strain ATCC 29605 / DSM 3757 / JCM 8879 / NBRC 14742 / NCIMB 2012 / VKM B-1768 / DS2) (Halobacterium volcanii).